The sequence spans 145 residues: Leghemoglobin-2 (145 aa).

Positions 3–145 constitute a Globin domain; sequence AFSDKQEGLV…ELAAAIKKAY (143 aa). Nitrated tyrosine is present on residues Y26 and Y31. Residue S46 coordinates heme b. S46 is modified (phosphoserine). An O2-binding site is contributed by H62. Heme b is bound by residues K65, H93, and K96. A Nitrated tyrosine modification is found at Y134.

This sequence belongs to the plant globin family. In terms of assembly, monomer. Nitrated in effective nodules and particularly in hypoxic conditions; this mechanism may play a protective role in the symbiosis by buffering toxic peroxynitrite NO(2)(-). Nitration level decrease during nodule senescence. In terms of processing, phosphorylation at Ser-46 disrupts the molecular environment of its porphyrin ring oxygen binding pocket, thus leading to a reduced oxygen consumption and to the delivery of oxygen O(2) to symbiosomes. In terms of tissue distribution, root nodules.

The protein localises to the cytoplasm. Its subcellular location is the cytosol. It is found in the nucleus. In terms of biological role, leghemoglobin that reversibly binds oxygen O(2) through a pentacoordinated heme iron. In root nodules, facilitates the diffusion of oxygen to the bacteroids while preventing the bacterial nitrogenase from being inactivated by buffering dioxygen, nitric oxide and carbon monoxide, and promoting the formation of reactive oxygen species (ROS, e.g. H(2)O(2)). This role is essential for symbiotic nitrogen fixation (SNF). This chain is Leghemoglobin-2, found in Vigna unguiculata (Cowpea).